Here is a 303-residue protein sequence, read N- to C-terminus: UDP-3-O-acyl-N-acetylglucosamine deacetylase (303 aa).

The Zn(2+) site is built by His78, His237, and Asp241. The Proton donor role is filled by His264.

The protein belongs to the LpxC family. Zn(2+) is required as a cofactor.

It carries out the reaction a UDP-3-O-[(3R)-3-hydroxyacyl]-N-acetyl-alpha-D-glucosamine + H2O = a UDP-3-O-[(3R)-3-hydroxyacyl]-alpha-D-glucosamine + acetate. It functions in the pathway glycolipid biosynthesis; lipid IV(A) biosynthesis; lipid IV(A) from (3R)-3-hydroxytetradecanoyl-[acyl-carrier-protein] and UDP-N-acetyl-alpha-D-glucosamine: step 2/6. In terms of biological role, catalyzes the hydrolysis of UDP-3-O-myristoyl-N-acetylglucosamine to form UDP-3-O-myristoylglucosamine and acetate, the committed step in lipid A biosynthesis. This is UDP-3-O-acyl-N-acetylglucosamine deacetylase from Saccharophagus degradans (strain 2-40 / ATCC 43961 / DSM 17024).